We begin with the raw amino-acid sequence, 303 residues long: Probable porphobilinogen deaminase (303 aa).

C240 carries the post-translational modification S-(dipyrrolylmethanemethyl)cysteine.

Belongs to the HMBS family. Dipyrromethane serves as cofactor.

It catalyses the reaction 4 porphobilinogen + H2O = hydroxymethylbilane + 4 NH4(+). It participates in porphyrin-containing compound metabolism; protoporphyrin-IX biosynthesis; coproporphyrinogen-III from 5-aminolevulinate: step 2/4. Its function is as follows. Tetrapolymerization of the monopyrrole PBG into the hydroxymethylbilane pre-uroporphyrinogen in several discrete steps. The chain is Probable porphobilinogen deaminase from Hyperthermus butylicus (strain DSM 5456 / JCM 9403 / PLM1-5).